Consider the following 918-residue polypeptide: Chaperone protein ClpC4, chloroplastic (918 aa).

The segment at 266–515 is i; that stretch reads LMEYGTNLTK…RLRNAQCKPS (250 aa). Residues 311–318 and 653–660 contribute to the ATP site; these read GEPGVGKT and GPTGVGKS. Positions 579-774 are II; sequence VTEDDVRHAI…LIVMTTNIGS (196 aa).

Belongs to the ClpA/ClpB family. ClpC subfamily.

It is found in the plastid. Its subcellular location is the chloroplast. Its function is as follows. Molecular chaperone that may interact with a ClpP-like protease involved in degradation of denatured proteins in the chloroplast. The sequence is that of Chaperone protein ClpC4, chloroplastic (CPLC4) from Oryza sativa subsp. japonica (Rice).